The chain runs to 100 residues: UPF0251 protein VVA1436 (100 aa).

It belongs to the UPF0251 family.

The protein is UPF0251 protein VVA1436 of Vibrio vulnificus (strain YJ016).